The primary structure comprises 486 residues: MEMKTHYIDGAMYIGCSEEHFTTYNPANGEPLANIKQANQSDMEAAIESAKRGFEVWSAMTAIERSRILNKAVAILRERNDELAALEVADTGKPIQEAIAVDITTGADVIEYYAGLAPSLQGEQQPLNENQFFYTRREPLGICAGIGAWNYPIQIAMWKSAPALAAGNAMIFKPSEETPLTALKLAEIYSEAGLPDGVFNVVQGDYRVGQMLTAHPDIAKVSFTGESGTGKVVMGDSAKTLKQVTMELGGKSPLIVFDDAKLDDAVSAAMVANFYTQGEVCTNGTRVFVHESIYDDFVAQLKTRTEKLVVGDPLDENTQIGALISKEHESKVLSAIESAKASGATLLTGGYKVTDNGLQNGNFVAPTVFIDCDDSMSHVQQEIFGPVMSVLKFSEEAEVIERANDTDYGLAAGVFTQNLSRAHRVIHKIQAGICWVNAWGDSPAEMPVGGYKQSGIGRENGVETLKHYTQTKSVLVQLSDFESPYA.

K(+)-binding residues include Thr23 and Asp90. NAD(+) is bound at residue 147–149 (GAW). Residue Lys159 is the Charge relay system of the active site. NAD(+) contacts are provided by residues 173-176 (KPSE) and 226-229 (ESGT). Residue Leu241 coordinates K(+). Glu247 serves as the catalytic Proton acceptor. Gly249, Cys281, and Glu382 together coordinate NAD(+). The active-site Nucleophile is the Cys281. Residue Cys281 is modified to Cysteine sulfenic acid (-SOH). Lys452 and Gly455 together coordinate K(+). Glu459 serves as the catalytic Charge relay system.

This sequence belongs to the aldehyde dehydrogenase family. As to quaternary structure, dimer of dimers. K(+) serves as cofactor.

It carries out the reaction betaine aldehyde + NAD(+) + H2O = glycine betaine + NADH + 2 H(+). It functions in the pathway amine and polyamine biosynthesis; betaine biosynthesis via choline pathway; betaine from betaine aldehyde: step 1/1. Involved in the biosynthesis of the osmoprotectant glycine betaine. Catalyzes the irreversible oxidation of betaine aldehyde to the corresponding acid. In Vibrio parahaemolyticus serotype O3:K6 (strain RIMD 2210633), this protein is Betaine aldehyde dehydrogenase.